Reading from the N-terminus, the 82-residue chain is Small ribosomal subunit protein uS17 (82 aa).

It belongs to the universal ribosomal protein uS17 family. Part of the 30S ribosomal subunit.

Functionally, one of the primary rRNA binding proteins, it binds specifically to the 5'-end of 16S ribosomal RNA. The chain is Small ribosomal subunit protein uS17 from Shewanella sediminis (strain HAW-EB3).